We begin with the raw amino-acid sequence, 240 residues long: tRNA1(Val) (adenine(37)-N6)-methyltransferase (240 aa).

It belongs to the methyltransferase superfamily. tRNA (adenine-N(6)-)-methyltransferase family.

It localises to the cytoplasm. It carries out the reaction adenosine(37) in tRNA1(Val) + S-adenosyl-L-methionine = N(6)-methyladenosine(37) in tRNA1(Val) + S-adenosyl-L-homocysteine + H(+). Functionally, specifically methylates the adenine in position 37 of tRNA(1)(Val) (anticodon cmo5UAC). This chain is tRNA1(Val) (adenine(37)-N6)-methyltransferase, found in Vibrio cholerae serotype O1 (strain ATCC 39315 / El Tor Inaba N16961).